A 365-amino-acid polypeptide reads, in one-letter code: Phosphatidylcholine:ceramide cholinephosphotransferase 4 (365 aa).

The Cytoplasmic segment spans residues 1-44 (MISYPFFSLSPPGLVPPPMAVPPVEMYSGSFWNRMRKPLPLRTQ). A helical membrane pass occupies residues 45–65 (VIRFTVVFVIVSFILAVALQI). Residues 66–92 (THERMPDPKVTKPLPDLGFELLTKVPG) lie on the Lumenal side of the membrane. A helical membrane pass occupies residues 93–113 (MYVLADCCIGFLNILSVFTAF). Topologically, residues 114 to 165 (KLYLLHRHCVGSGEPELPCNIPGVSRFFLSVWLCKENCRIELRNIHTIAWIR) are cytoplasmic. A helical membrane pass occupies residues 166–186 (FITSYALLLLFRSAVIVMTSL). The Lumenal segment spans residues 187-229 (PAPDDLCQDPPKIENPVKNVILTVLTAGGGSIHCGDLMYSGHT). His228 is an active-site residue. The chain crosses the membrane as a helical span at residues 230–250 (VILTLHLMFHWIYGAMVHWSF). Arg251 is a topological domain (cytoplasmic). Residues 252–272 (PVVTVVAIFGYYCIVASRFHY) traverse the membrane as a helical segment. Active-site residues include His271 and Asp275. Topologically, residues 273–275 (TDD) are lumenal. A helical membrane pass occupies residues 276–296 (VLVAIYLTIATFIAVGHNADG). Residues 297–365 (APWQLQLFIR…SLMFKCGAYV (69 aa)) lie on the Cytoplasmic side of the membrane.

It belongs to the sphingomyelin synthase family.

Its subcellular location is the golgi apparatus membrane. It catalyses the reaction an N-acylsphing-4-enine + a 1,2-diacyl-sn-glycero-3-phosphocholine = a sphingomyelin + a 1,2-diacyl-sn-glycerol. It carries out the reaction an N-acylsphinganine + a 1,2-diacyl-sn-glycero-3-phosphocholine = an N-acylsphinganine-1-phosphocholine + a 1,2-diacyl-sn-glycerol. The catalysed reaction is an N-acylsphing-4-enine + a 1,2-diacyl-sn-glycero-3-phosphoethanolamine = an N-acylsphing-4-enine 1-phosphoethanolamine + a 1,2-diacyl-sn-glycerol. The enzyme catalyses an N-acylsphinganine + a 1,2-diacyl-sn-glycero-3-phosphoethanolamine = an N-acylsphinganine-1-phosphoethanolamine + a 1,2-diacyl-sn-glycerol. It catalyses the reaction a 1,2-diacyl-sn-glycero-3-phospho-(1D-myo-inositol) + an N-acylsphing-4-enine = an N-acylsphing-4-enine-(1D-myo-inositol) + a 1,2-diacyl-sn-glycerol. It carries out the reaction an N-acylsphinganine + a 1,2-diacyl-sn-glycero-3-phospho-(1D-myo-inositol) = an N-acylsphinganine-(1D-myo-inositol) + a 1,2-diacyl-sn-glycerol. In terms of biological role, bifunctional sphingomyelin (SM)/ethanolamine phosphorylceramide (EPC) synthase with minimal inositol phosphorylceramide (IPC) synthase activity. Specificity is likely to be defined by residues in the lumenal catalytic domain that interact with the polar head groups of the phospholipid donors. SM is synthesized by both stages of the parasite life cycle, bloodstream forms (BSF) and procyclic forms (PCF), by transferring the phosphoryl headgroup from a 1,2-diacyl-sn-glycero-3-phosphocholine to an N-acylsphing-4-enine (ceramide) or an N-acylsphinganine (dihydroceramide) with release of 1,2-diacyl-sn-glycerol. Also catalyzes the reverse reaction, production of ceramide from sphingomyelin. EPC is synthesized by transferring phosphoethanolamine from a 1,2-diacyl-sn-glycero-3-phosphoethanolamine to ceramide or dihydroceramide by BSF and PCF, while IPC is confined to PCF. The ceramide/dihydroceramide ratios are skewed towards dihydroceramide in PCF parasites and ceramide in BSF parasites, this is likely due to differential expression and/or regulation of dihydroceramide desaturase, the enzyme responsible for converting dihydroceramide to ceramide. This is Phosphatidylcholine:ceramide cholinephosphotransferase 4 from Trypanosoma brucei brucei.